Here is a 313-residue protein sequence, read N- to C-terminus: tRNA uridine(34) hydroxylase (313 aa).

In terms of domain architecture, Rhodanese spans 127-225 (SDPDTILIDT…YLETVPEEES (99 aa)). Cys-185 functions as the Cysteine persulfide intermediate in the catalytic mechanism.

This sequence belongs to the TrhO family.

The catalysed reaction is uridine(34) in tRNA + AH2 + O2 = 5-hydroxyuridine(34) in tRNA + A + H2O. Functionally, catalyzes oxygen-dependent 5-hydroxyuridine (ho5U) modification at position 34 in tRNAs. This is tRNA uridine(34) hydroxylase from Gluconobacter oxydans (strain 621H) (Gluconobacter suboxydans).